Reading from the N-terminus, the 339-residue chain is Methionine import ATP-binding protein MetN 2 (339 aa).

The region spanning 2-241 is the ABC transporter domain; sequence ISFNNVSKVY…PKTKTTQNFV (240 aa). 38-45 is a binding site for ATP; the sequence is GFSGAGKS.

Belongs to the ABC transporter superfamily. Methionine importer (TC 3.A.1.24) family. The complex is composed of two ATP-binding proteins (MetN), two transmembrane proteins (MetI) and a solute-binding protein (MetQ).

It localises to the cell membrane. The catalysed reaction is L-methionine(out) + ATP + H2O = L-methionine(in) + ADP + phosphate + H(+). It carries out the reaction D-methionine(out) + ATP + H2O = D-methionine(in) + ADP + phosphate + H(+). Functionally, part of the ABC transporter complex MetNIQ involved in methionine import. Responsible for energy coupling to the transport system. This is Methionine import ATP-binding protein MetN 2 from Bacillus cereus (strain ZK / E33L).